Consider the following 297-residue polypeptide: Light-independent protochlorophyllide reductase iron-sulfur ATP-binding protein (297 aa).

Residues 41–46 and Lys70 contribute to the ATP site; that span reads GIGKST. Residue Ser45 participates in Mg(2+) binding. Cys126 and Cys160 together coordinate [4Fe-4S] cluster. Residues 211–212 and 235–237 contribute to the ATP site; these read NR and PDL.

The protein belongs to the NifH/BchL/ChlL family. In terms of assembly, homodimer. Protochlorophyllide reductase is composed of three subunits; BchL, BchN and BchB. Requires [4Fe-4S] cluster as cofactor.

The enzyme catalyses chlorophyllide a + oxidized 2[4Fe-4S]-[ferredoxin] + 2 ADP + 2 phosphate = protochlorophyllide a + reduced 2[4Fe-4S]-[ferredoxin] + 2 ATP + 2 H2O. It functions in the pathway porphyrin-containing compound metabolism; bacteriochlorophyll biosynthesis (light-independent). Functionally, component of the dark-operative protochlorophyllide reductase (DPOR) that uses Mg-ATP and reduced ferredoxin to reduce ring D of protochlorophyllide (Pchlide) to form chlorophyllide a (Chlide). This reaction is light-independent. The L component serves as a unique electron donor to the NB-component of the complex, and binds Mg-ATP. This Cereibacter sphaeroides (strain KD131 / KCTC 12085) (Rhodobacter sphaeroides) protein is Light-independent protochlorophyllide reductase iron-sulfur ATP-binding protein.